The sequence spans 493 residues: Aspartyl/glutamyl-tRNA(Asn/Gln) amidotransferase subunit B (493 aa).

The segment at 473–493 (KSGGKANPKQAADLVNKRLTE) is disordered.

It belongs to the GatB/GatE family. GatB subfamily. As to quaternary structure, heterotrimer of A, B and C subunits.

The catalysed reaction is L-glutamyl-tRNA(Gln) + L-glutamine + ATP + H2O = L-glutaminyl-tRNA(Gln) + L-glutamate + ADP + phosphate + H(+). It catalyses the reaction L-aspartyl-tRNA(Asn) + L-glutamine + ATP + H2O = L-asparaginyl-tRNA(Asn) + L-glutamate + ADP + phosphate + 2 H(+). Its function is as follows. Allows the formation of correctly charged Asn-tRNA(Asn) or Gln-tRNA(Gln) through the transamidation of misacylated Asp-tRNA(Asn) or Glu-tRNA(Gln) in organisms which lack either or both of asparaginyl-tRNA or glutaminyl-tRNA synthetases. The reaction takes place in the presence of glutamine and ATP through an activated phospho-Asp-tRNA(Asn) or phospho-Glu-tRNA(Gln). The protein is Aspartyl/glutamyl-tRNA(Asn/Gln) amidotransferase subunit B of Treponema denticola (strain ATCC 35405 / DSM 14222 / CIP 103919 / JCM 8153 / KCTC 15104).